The chain runs to 635 residues: Extracellular metalloproteinase 1 (635 aa).

An N-terminal signal peptide occupies residues 1–19 (MHGLLLAAGLLSLPLHVLA). The propeptide occupies 20-246 (HPQPSTSTSL…VHNVVDYVAH (227 aa)). N-linked (GlcNAc...) asparagine glycosylation occurs at Asn287. Zn(2+) is bound at residue His430. The active site involves Glu431. His434 is a binding site for Zn(2+). N-linked (GlcNAc...) asparagine glycans are attached at residues Asn475, Asn594, and Asn623.

It belongs to the peptidase M36 family. Requires Zn(2+) as cofactor.

The protein localises to the secreted. Secreted metalloproteinase probably acting as a virulence factor. This chain is Extracellular metalloproteinase 1 (MEP1), found in Arthroderma benhamiae (Trichophyton mentagrophytes).